Here is a 487-residue protein sequence, read N- to C-terminus: Fibroblast growth factor receptor-like 1 (487 aa).

The N-terminal stretch at 1–18 (MGLQLALLLAGIVALSDS) is a signal peptide. At 19 to 371 (ARGPPRIADK…PSSVSSLPWP (353 aa)) the chain is on the extracellular side. An Ig-like C2-type 1 domain is found at 23–109 (PRIADKVIHR…GSTNVNYTLI (87 aa)). A disulfide bond links Cys-45 and Cys-93. Residue Asn-105 is glycosylated (N-linked (GlcNAc...) asparagine). The span at 115 to 125 (SSGKNSQTPEG) shows a compositional bias: polar residues. A disordered region spans residues 115–147 (SSGKNSQTPEGSNGEYEDHSGKQWAQPRFTQPA). Ig-like C2-type domains follow at residues 141–231 (PRFT…YKVE) and 240–348 (PILT…AFLT). An intrachain disulfide couples Cys-166 to Cys-215. 3 N-linked (GlcNAc...) asparagine glycosylation sites follow: Asn-225, Asn-249, and Asn-287. Cys-262 and Cys-332 are joined by a disulfide. The helical transmembrane segment at 372–392 (VIIGIPAGAVFIFGTILLWLC) threads the bilayer. At 393-487 (QTKKKPCSPP…HQHQHIQYQC (95 aa)) the chain is on the cytoplasmic side.

As to quaternary structure, interacts with heparin and FGF2. Expressed in cartilaginous structures.

It localises to the cell membrane. Its function is as follows. Has a negative effect on cell proliferation. This Gallus gallus (Chicken) protein is Fibroblast growth factor receptor-like 1 (FGFRL1).